The sequence spans 430 residues: Enolase (430 aa).

A (2R)-2-phosphoglycerate-binding site is contributed by Gln163. Glu205 (proton donor) is an active-site residue. Residues Asp242, Glu286, and Asp313 each coordinate Mg(2+). Lys338, Arg367, Ser368, and Lys389 together coordinate (2R)-2-phosphoglycerate. The active-site Proton acceptor is the Lys338.

It belongs to the enolase family. Mg(2+) serves as cofactor.

The protein localises to the cytoplasm. It localises to the secreted. The protein resides in the cell surface. The catalysed reaction is (2R)-2-phosphoglycerate = phosphoenolpyruvate + H2O. Its pathway is carbohydrate degradation; glycolysis; pyruvate from D-glyceraldehyde 3-phosphate: step 4/5. Its function is as follows. Catalyzes the reversible conversion of 2-phosphoglycerate (2-PG) into phosphoenolpyruvate (PEP). It is essential for the degradation of carbohydrates via glycolysis. This chain is Enolase, found in Symbiobacterium thermophilum (strain DSM 24528 / JCM 14929 / IAM 14863 / T).